The chain runs to 887 residues: Lateral signaling target protein 2 homolog (887 aa).

K87 is covalently cross-linked (Glycyl lysine isopeptide (Lys-Gly) (interchain with G-Cter in ubiquitin)). Positions P308–P327 are disordered. S334 is modified (phosphoserine). Disordered stretches follow at residues D354–E396 and A412–A474. Position 516 is a phosphothreonine (T516). S586 is subject to Phosphoserine; by MAP2K. Positions L599–E714 are disordered. The span at A602 to E612 shows a compositional bias: basic and acidic residues. Over residues T638–G648 the composition is skewed to polar residues. Low complexity-rich tracts occupy residues S681–S693 and A700–A711. The FYVE-type zinc-finger motif lies at D817–P879. Zn(2+) contacts are provided by C823, C826, C839, C842, C847, C850, and C869. The residue at position 870 (T870) is a Phosphothreonine; by MAP2K. C872 contributes to the Zn(2+) binding site.

This sequence belongs to the lst-2 family. Interacts with TRIM3. In terms of processing, monoubiquitination at Lys-87 prevents binding to phosphatidylinositol 3-phosphate (PI3P) and localization to early endosome membranes.

It localises to the cytoplasm. The protein localises to the cytosol. It is found in the early endosome membrane. Functionally, negative regulator of epidermal growth factor receptor (EGFR) signaling. Acts by promoting EGFR degradation in endosomes when not monoubiquitinated. The sequence is that of Lateral signaling target protein 2 homolog (ZFYVE28) from Homo sapiens (Human).